Consider the following 273-residue polypeptide: Holocytochrome c-type synthase (273 aa).

A compositionally biased stretch (low complexity) spans 1 to 18; the sequence is MGLSASSPAATAQSAAEP. Positions 1–39 are disordered; the sequence is MGLSASSPAATAQSAAEPSKQHQVASPPSECPMHQEKMR. HRM repeat units follow at residues 30–35 and 40–45; these read ECPMHQ and GCPMHM.

It belongs to the cytochrome c-type heme lyase family.

The protein localises to the mitochondrion inner membrane. The catalysed reaction is holo-[cytochrome c] = apo-[cytochrome c] + heme b. Functionally, lyase that catalyzes the covalent linking of the heme group to the cytochrome C apoprotein to produce the mature functional cytochrome. The chain is Holocytochrome c-type synthase (HCCS) from Gallus gallus (Chicken).